The chain runs to 33 residues: Pardaxin P-1 (33 aa).

The protein belongs to the pardaxin family. In terms of assembly, in aqueous solution exists as a tetramer.

It localises to the secreted. The protein localises to the target cell membrane. Functionally, exhibits unusual shark repellent and surfactant properties. Forms voltage-dependent, ion-permeable channels in membranes. At high concentration causes cell membrane lysis. Causes death in killfish oryzias latipes in 30 minutes at a concentration of 25 micrograms/ml. The polypeptide is Pardaxin P-1 (Pardachirus pavoninus (Peacock sole)).